We begin with the raw amino-acid sequence, 44 residues long: Large ribosomal subunit protein P2 (44 aa).

Residue M1 is modified to N-acetylmethionine. Phosphoserine occurs at positions 17 and 19. K21 is modified (N6-acetyllysine; alternate). K21 is subject to N6-succinyllysine; alternate.

It belongs to the eukaryotic ribosomal protein P1/P2 family. Heterodimer with RPLP1 at the lateral ribosomal stalk of the large ribosomal subunit. Phosphorylated.

In terms of biological role, plays an important role in the elongation step of protein synthesis. The chain is Large ribosomal subunit protein P2 (RPLP2) from Oryctolagus cuniculus (Rabbit).